The chain runs to 234 residues: MSRVADIPTATVGRVVTYIRVLEELEAQNVLRASSGELARRAGVTPFQVRKDLTYFGRFGTRGIGYTVAVLRRELLRALGLDQTWNVVIVGMGRLGHAIANYPGASDYQFQNVGLFDVAPDVVGREVRGLTIQHMSQLGPFVASVAGTPRQVDMGLLTVPAEHAQAAAQALVAAGVGGILNFAPVVLQTQDLHLPEAFAAPGRREVTVENVDFLAGMKRLAFYMLGPQAGPAEE.

Positions 17 to 56 form a DNA-binding region, H-T-H motif; sequence TYIRVLEELEAQNVLRASSGELARRAGVTPFQVRKDLTYF. 91–96 provides a ligand contact to NAD(+); it reads GMGRLG.

It belongs to the transcriptional regulatory Rex family. In terms of assembly, homodimer.

The protein resides in the cytoplasm. Functionally, modulates transcription in response to changes in cellular NADH/NAD(+) redox state. The sequence is that of Redox-sensing transcriptional repressor Rex from Deinococcus radiodurans (strain ATCC 13939 / DSM 20539 / JCM 16871 / CCUG 27074 / LMG 4051 / NBRC 15346 / NCIMB 9279 / VKM B-1422 / R1).